Consider the following 184-residue polypeptide: UPF0397 protein SAR2767 (184 aa).

The next 5 helical transmembrane spans lie at valine 11 to proline 31, alanine 44 to isoleucine 64, alanine 77 to leucine 97, glycine 117 to isoleucine 137, and glutamine 148 to leucine 168.

The protein belongs to the UPF0397 family.

It localises to the cell membrane. The polypeptide is UPF0397 protein SAR2767 (Staphylococcus aureus (strain MRSA252)).